A 327-amino-acid polypeptide reads, in one-letter code: Zinc finger protein 444 (327 aa).

Position 1 is an N-acetylmethionine (Met1). Lys8 participates in a covalent cross-link: Glycyl lysine isopeptide (Lys-Gly) (interchain with G-Cter in SUMO2). Residues Ser18 and Ser104 each carry the phosphoserine modification. The SCAN box domain maps to 20–104; it reads WHRFRRFHLG…LEELWGPAAS (85 aa). The tract at residues 101–171 is disordered; it reads PAASPDGSSA…SPPLAPGLPA (71 aa). Positions 106–118 are enriched in polar residues; that stretch reads DGSSATRVPQDVT. Over residues 134–148 the composition is skewed to low complexity; it reads PLAGTAPGAEGPAPG. 2 C2H2-type zinc fingers span residues 179 to 201 and 207 to 229; these read TSCP…RQSH and HACP…RDTH. Lys190 participates in a covalent cross-link: Glycyl lysine isopeptide (Lys-Gly) (interchain with G-Cter in SUMO2). The segment at 220–243 is disordered; the sequence is EHLRRHRDTHPGSPGSPGPALRPL. A Phosphoserine modification is found at Ser235. C2H2-type zinc fingers lie at residues 250–272 and 278–300; these read HACC…RKTH and FACW…QRIH. Positions 305-314 are enriched in low complexity; sequence ASAQGAVAPG. A disordered region spans residues 305–327; that stretch reads ASAQGAVAPGPDGGGPFPPWPLG.

Belongs to the krueppel C2H2-type zinc-finger protein family.

It is found in the nucleus. Functionally, transcriptional regulator. Binds to the 5'-flanking critical region of the SCARF1 promoter. The polypeptide is Zinc finger protein 444 (ZNF444) (Homo sapiens (Human)).